Reading from the N-terminus, the 210-residue chain is Urease accessory protein UreF (210 aa).

Belongs to the UreF family. In terms of assembly, ureD, UreF and UreG form a complex that acts as a GTP-hydrolysis-dependent molecular chaperone, activating the urease apoprotein by helping to assemble the nickel containing metallocenter of UreC. The UreE protein probably delivers the nickel.

The protein resides in the cytoplasm. Required for maturation of urease via the functional incorporation of the urease nickel metallocenter. This Dinoroseobacter shibae (strain DSM 16493 / NCIMB 14021 / DFL 12) protein is Urease accessory protein UreF.